A 302-amino-acid polypeptide reads, in one-letter code: Pseudouridine-5'-phosphate glycosidase (302 aa).

Glu-25 acts as the Proton donor in catalysis. Residues Lys-86 and Val-106 each contribute to the substrate site. Residue Asp-138 coordinates Mn(2+). 140–142 (SAD) is a substrate binding site. Lys-159 serves as the catalytic Nucleophile.

The protein belongs to the pseudouridine-5'-phosphate glycosidase family. As to quaternary structure, homotrimer. Mn(2+) serves as cofactor.

The enzyme catalyses D-ribose 5-phosphate + uracil = psi-UMP + H2O. Its function is as follows. Catalyzes the reversible cleavage of pseudouridine 5'-phosphate (PsiMP) to ribose 5-phosphate and uracil. Functions biologically in the cleavage direction, as part of a pseudouridine degradation pathway. This Jannaschia sp. (strain CCS1) protein is Pseudouridine-5'-phosphate glycosidase.